The following is a 468-amino-acid chain: ATP synthase subunit beta (468 aa).

ATP is bound at residue 153–160 (GGAGVGKT).

Belongs to the ATPase alpha/beta chains family. In terms of assembly, F-type ATPases have 2 components, CF(1) - the catalytic core - and CF(0) - the membrane proton channel. CF(1) has five subunits: alpha(3), beta(3), gamma(1), delta(1), epsilon(1). CF(0) has three main subunits: a(1), b(2) and c(9-12). The alpha and beta chains form an alternating ring which encloses part of the gamma chain. CF(1) is attached to CF(0) by a central stalk formed by the gamma and epsilon chains, while a peripheral stalk is formed by the delta and b chains.

The protein localises to the cell inner membrane. The catalysed reaction is ATP + H2O + 4 H(+)(in) = ADP + phosphate + 5 H(+)(out). In terms of biological role, produces ATP from ADP in the presence of a proton gradient across the membrane. The catalytic sites are hosted primarily by the beta subunits. This chain is ATP synthase subunit beta, found in Nautilia profundicola (strain ATCC BAA-1463 / DSM 18972 / AmH).